The chain runs to 147 residues: Small ribosomal subunit protein uS12 (147 aa).

This sequence belongs to the universal ribosomal protein uS12 family. As to quaternary structure, part of the 30S ribosomal subunit.

In terms of biological role, with S4 and S5 plays an important role in translational accuracy. Located at the interface of the 30S and 50S subunits. In Pyrobaculum calidifontis (strain DSM 21063 / JCM 11548 / VA1), this protein is Small ribosomal subunit protein uS12.